We begin with the raw amino-acid sequence, 955 residues long: Bifunctional glutamine synthetase adenylyltransferase/adenylyl-removing enzyme (955 aa).

The tract at residues 1-458 (MTAQAPLSVA…QFEQTFSDKQ (458 aa)) is adenylyl removase. The adenylyl transferase stretch occupies residues 464-955 (CAAIWHADLL…GSIDAASPTP (492 aa)).

Belongs to the GlnE family. Requires Mg(2+) as cofactor.

The catalysed reaction is [glutamine synthetase]-O(4)-(5'-adenylyl)-L-tyrosine + phosphate = [glutamine synthetase]-L-tyrosine + ADP. It carries out the reaction [glutamine synthetase]-L-tyrosine + ATP = [glutamine synthetase]-O(4)-(5'-adenylyl)-L-tyrosine + diphosphate. Involved in the regulation of glutamine synthetase GlnA, a key enzyme in the process to assimilate ammonia. When cellular nitrogen levels are high, the C-terminal adenylyl transferase (AT) inactivates GlnA by covalent transfer of an adenylyl group from ATP to specific tyrosine residue of GlnA, thus reducing its activity. Conversely, when nitrogen levels are low, the N-terminal adenylyl removase (AR) activates GlnA by removing the adenylyl group by phosphorolysis, increasing its activity. The regulatory region of GlnE binds the signal transduction protein PII (GlnB) which indicates the nitrogen status of the cell. This is Bifunctional glutamine synthetase adenylyltransferase/adenylyl-removing enzyme from Ralstonia nicotianae (strain ATCC BAA-1114 / GMI1000) (Ralstonia solanacearum).